Reading from the N-terminus, the 146-residue chain is MAALRLLLGIDYGTKQIGVAVGQAITGQARELCTLKAQNGVPDWDKVQALINEWKPDAIVVGLPLNMDGTPSDMSARAEKFSRKLNGRFGVTVYTHDERLTTFEAKGERMARGGQKGSYRNNPVDAIAAALLLQGWLDEHPELLNV.

It belongs to the YqgF nuclease family.

It localises to the cytoplasm. In terms of biological role, could be a nuclease involved in processing of the 5'-end of pre-16S rRNA. The polypeptide is Putative pre-16S rRNA nuclease (Pseudomonas savastanoi pv. phaseolicola (strain 1448A / Race 6) (Pseudomonas syringae pv. phaseolicola (strain 1448A / Race 6))).